A 152-amino-acid chain; its full sequence is S-ribosylhomocysteine lyase (152 aa).

Fe cation is bound by residues His-53, His-57, and Cys-120.

This sequence belongs to the LuxS family. In terms of assembly, homodimer. Fe cation is required as a cofactor.

It catalyses the reaction S-(5-deoxy-D-ribos-5-yl)-L-homocysteine = (S)-4,5-dihydroxypentane-2,3-dione + L-homocysteine. Involved in the synthesis of autoinducer 2 (AI-2) which is secreted by bacteria and is used to communicate both the cell density and the metabolic potential of the environment. The regulation of gene expression in response to changes in cell density is called quorum sensing. Catalyzes the transformation of S-ribosylhomocysteine (RHC) to homocysteine (HC) and 4,5-dihydroxy-2,3-pentadione (DPD). The sequence is that of S-ribosylhomocysteine lyase from Enterococcus faecalis (strain ATCC 700802 / V583).